The following is a 583-amino-acid chain: Phosphoglucomutase, cytoplasmic (583 aa).

Positions 1–20 (MANFKVSRVETTPFEGQKPG) are disordered. Arg-25 and Ser-124 together coordinate alpha-D-glucose 1,6-bisphosphate. Ser-124 acts as the Phosphoserine intermediate in catalysis. Residues Ser-124, Asp-300, Asp-302, and Asp-304 each contribute to the Mg(2+) site. At Ser-124 the chain carries Phosphoserine. Residues Asp-304, Arg-305, Thr-368, Glu-387, Ser-389, and Lys-400 each coordinate alpha-D-glucose 1,6-bisphosphate.

Belongs to the phosphohexose mutase family. Monomer. Mg(2+) is required as a cofactor.

Its subcellular location is the cytoplasm. The enzyme catalyses alpha-D-glucose 1-phosphate = alpha-D-glucose 6-phosphate. The catalysed reaction is O-phospho-L-seryl-[protein] + alpha-D-glucose 1-phosphate = alpha-D-glucose 1,6-bisphosphate + L-seryl-[protein]. It carries out the reaction alpha-D-glucose 1,6-bisphosphate + L-seryl-[protein] = O-phospho-L-seryl-[protein] + alpha-D-glucose 6-phosphate. Its function is as follows. Catalyzes the reversible isomerization of alpha-D-glucose 1-phosphate to alpha-D-glucose 6-phosphate. The mechanism proceeds via the intermediate compound alpha-D-glucose 1,6-bisphosphate. This enzyme participates in both the breakdown and synthesis of glucose. The polypeptide is Phosphoglucomutase, cytoplasmic (PGM1) (Solanum tuberosum (Potato)).